The sequence spans 262 residues: Phosphatidylserine decarboxylase proenzyme (262 aa).

Residues aspartate 86, histidine 142, and serine 226 each act as charge relay system; for autoendoproteolytic cleavage activity in the active site. Serine 226 serves as the catalytic Schiff-base intermediate with substrate; via pyruvic acid; for decarboxylase activity. Serine 226 carries the post-translational modification Pyruvic acid (Ser); by autocatalysis.

It belongs to the phosphatidylserine decarboxylase family. PSD-B subfamily. Prokaryotic type I sub-subfamily. In terms of assembly, heterodimer of a large membrane-associated beta subunit and a small pyruvoyl-containing alpha subunit. Pyruvate is required as a cofactor. Post-translationally, is synthesized initially as an inactive proenzyme. Formation of the active enzyme involves a self-maturation process in which the active site pyruvoyl group is generated from an internal serine residue via an autocatalytic post-translational modification. Two non-identical subunits are generated from the proenzyme in this reaction, and the pyruvate is formed at the N-terminus of the alpha chain, which is derived from the carboxyl end of the proenzyme. The autoendoproteolytic cleavage occurs by a canonical serine protease mechanism, in which the side chain hydroxyl group of the serine supplies its oxygen atom to form the C-terminus of the beta chain, while the remainder of the serine residue undergoes an oxidative deamination to produce ammonia and the pyruvoyl prosthetic group on the alpha chain. During this reaction, the Ser that is part of the protease active site of the proenzyme becomes the pyruvoyl prosthetic group, which constitutes an essential element of the active site of the mature decarboxylase.

It is found in the cell membrane. The enzyme catalyses a 1,2-diacyl-sn-glycero-3-phospho-L-serine + H(+) = a 1,2-diacyl-sn-glycero-3-phosphoethanolamine + CO2. It participates in phospholipid metabolism; phosphatidylethanolamine biosynthesis; phosphatidylethanolamine from CDP-diacylglycerol: step 2/2. Functionally, catalyzes the formation of phosphatidylethanolamine (PtdEtn) from phosphatidylserine (PtdSer). This Bacillus cereus (strain ZK / E33L) protein is Phosphatidylserine decarboxylase proenzyme.